The following is a 636-amino-acid chain: Cysteine-rich receptor-like protein kinase 24 (636 aa).

Positions 1–20 are cleaved as a signal peptide; that stretch reads MVKFLVIFWFVVISFSHVSA. Gnk2-homologous domains follow at residues 21-124 and 130-235; these read QVCL…NRSF and MEIL…LYPF. Residues 21–254 are Extracellular-facing; the sequence is QVCLERSGFF…RQKDGKSIST (234 aa). N-linked (GlcNAc...) asparagine glycosylation is found at Asn-33, Asn-50, Asn-98, Asn-101, Asn-121, Asn-137, Asn-145, and Asn-197. The helical transmembrane segment at 255-275 threads the bilayer; that stretch reads GAIVAIIVVPILLLALGVGLW. Residues 276-636 lie on the Cytoplasmic side of the membrane; that stretch reads KRRKAYKTKT…SVSVTCVSPR (361 aa). Positions 312–585 constitute a Protein kinase domain; it reads FHNVNKLGHG…TMSTVFHMLT (274 aa). Residues 318-326 and Lys-340 contribute to the ATP site; that span reads LGHGGFGEV. Asp-437 serves as the catalytic Proton acceptor.

The protein belongs to the protein kinase superfamily. Ser/Thr protein kinase family. CRK subfamily.

The protein localises to the membrane. The enzyme catalyses L-seryl-[protein] + ATP = O-phospho-L-seryl-[protein] + ADP + H(+). It carries out the reaction L-threonyl-[protein] + ATP = O-phospho-L-threonyl-[protein] + ADP + H(+). This is Cysteine-rich receptor-like protein kinase 24 (CRK24) from Arabidopsis thaliana (Mouse-ear cress).